The following is a 339-amino-acid chain: Ketol-acid reductoisomerase (NADP(+)) (339 aa).

One can recognise a KARI N-terminal Rossmann domain in the interval 1–182 (MRVYYDRDAD…GGGRSGIIET (182 aa)). NADP(+) contacts are provided by residues 24-27 (YGSQ), K48, S51, T53, and 83-86 (DELQ). Residue H108 is part of the active site. An NADP(+)-binding site is contributed by G134. The KARI C-terminal knotted domain occupies 183-328 (NFREECETDL…AKLRGMMPWI (146 aa)). Residues D191, E195, E227, and E231 each coordinate Mg(2+). Residue S252 coordinates substrate.

This sequence belongs to the ketol-acid reductoisomerase family. The cofactor is Mg(2+).

The enzyme catalyses (2R)-2,3-dihydroxy-3-methylbutanoate + NADP(+) = (2S)-2-acetolactate + NADPH + H(+). The catalysed reaction is (2R,3R)-2,3-dihydroxy-3-methylpentanoate + NADP(+) = (S)-2-ethyl-2-hydroxy-3-oxobutanoate + NADPH + H(+). Its pathway is amino-acid biosynthesis; L-isoleucine biosynthesis; L-isoleucine from 2-oxobutanoate: step 2/4. The protein operates within amino-acid biosynthesis; L-valine biosynthesis; L-valine from pyruvate: step 2/4. In terms of biological role, involved in the biosynthesis of branched-chain amino acids (BCAA). Catalyzes an alkyl-migration followed by a ketol-acid reduction of (S)-2-acetolactate (S2AL) to yield (R)-2,3-dihydroxy-isovalerate. In the isomerase reaction, S2AL is rearranged via a Mg-dependent methyl migration to produce 3-hydroxy-3-methyl-2-ketobutyrate (HMKB). In the reductase reaction, this 2-ketoacid undergoes a metal-dependent reduction by NADPH to yield (R)-2,3-dihydroxy-isovalerate. The polypeptide is Ketol-acid reductoisomerase (NADP(+)) (Rhizobium etli (strain ATCC 51251 / DSM 11541 / JCM 21823 / NBRC 15573 / CFN 42)).